A 256-amino-acid polypeptide reads, in one-letter code: MLRIADKTFESHLFTGTGKFAAPEVMVEAIRASGSQLVTLAMKRVDLRQHNDAILAPLLAAGVSLLPNTSGAKTAEEAVFAARLAREALGTHWLKLEIHPDARWLLPDPIETLKAAELLVCEGFVVLPYCGADPVLCKRLEEAGCAAVMPLGAPIGSNQGLETRAMLEIIIEQATVPVVVDAGIGVPSHAAQALEMGADAVLVNTAIAVADDPVTMARAFRMAVDAGLLARQAGPGARSTQAQATSPLTGFLEALA.

The active-site Schiff-base intermediate with DXP is the lysine 95. Residues glycine 156, 182-183, and 204-205 contribute to the 1-deoxy-D-xylulose 5-phosphate site; these read AG and NT.

This sequence belongs to the ThiG family. As to quaternary structure, homotetramer. Forms heterodimers with either ThiH or ThiS.

The protein resides in the cytoplasm. The catalysed reaction is [ThiS sulfur-carrier protein]-C-terminal-Gly-aminoethanethioate + 2-iminoacetate + 1-deoxy-D-xylulose 5-phosphate = [ThiS sulfur-carrier protein]-C-terminal Gly-Gly + 2-[(2R,5Z)-2-carboxy-4-methylthiazol-5(2H)-ylidene]ethyl phosphate + 2 H2O + H(+). The protein operates within cofactor biosynthesis; thiamine diphosphate biosynthesis. Its function is as follows. Catalyzes the rearrangement of 1-deoxy-D-xylulose 5-phosphate (DXP) to produce the thiazole phosphate moiety of thiamine. Sulfur is provided by the thiocarboxylate moiety of the carrier protein ThiS. In vitro, sulfur can be provided by H(2)S. This is Thiazole synthase from Klebsiella pneumoniae (strain 342).